The following is a 986-amino-acid chain: Zinc finger protein 445 (986 aa).

Residues 52 to 134 (RQLFRQLRYH…ALLEELQRDL (83 aa)) form the SCAN box domain. The 71-residue stretch at 219–289 (LTFQDVEVTF…NICTVQLKRD (71 aa)) folds into the KRAB domain. Glycyl lysine isopeptide (Lys-Gly) (interchain with G-Cter in SUMO2) cross-links involve residues K302, K360, and K385. The tract at residues 433 to 460 (QNTGLKENGKDRYGETSRKSWHAHPEHR) is disordered. A compositionally biased stretch (basic and acidic residues) spans 439–460 (ENGKDRYGETSRKSWHAHPEHR). 2 C2H2-type zinc fingers span residues 470 to 492 (FQCR…EKIH) and 498 to 520 (YQCS…QKTH). Residue K524 forms a Glycyl lysine isopeptide (Lys-Gly) (interchain with G-Cter in SUMO2) linkage. C2H2-type zinc fingers lie at residues 553–575 (LHCN…QRIH) and 581–604 (YKCT…KLHH). Residue K609 forms a Glycyl lysine isopeptide (Lys-Gly) (interchain with G-Cter in SUMO2) linkage. 2 consecutive C2H2-type zinc fingers follow at residues 634–656 (FPCQ…QRIH) and 662–686 (YQCS…RTQH). K691 is covalently cross-linked (Glycyl lysine isopeptide (Lys-Gly) (interchain with G-Cter in SUMO2)). C2H2-type zinc fingers lie at residues 718 to 740 (NKCK…ERVH), 746 to 768 (YQCR…QRKH), 796 to 818 (FWCQ…KGIH), and 824 to 846 (FKCN…QRIH). A Glycyl lysine isopeptide (Lys-Gly) (interchain with G-Cter in SUMO2) cross-link involves residue K929. 2 consecutive C2H2-type zinc fingers follow at residues 933–955 (HKCS…KRCH) and 961–983 (FKCI…MKNH).

It belongs to the krueppel C2H2-type zinc-finger protein family.

It is found in the nucleus. Its function is as follows. Transcription regulator required to maintain maternal and paternal gene imprinting, a process by which gene expression is restricted in a parent of origin-specific manner by epigenetic modification of genomic DNA and chromatin, including DNA methylation. Acts by controlling DNA methylation during the earliest multicellular stages of development at multiple imprinting control regions (ICRs). Acts together with ZFP57, but ZFP57 plays the predominant role in imprinting maintenance. In contrast, ZNF445 seems to be the major factor in human early embryonic imprinting maintenance. The chain is Zinc finger protein 445 (Znf445) from Mus musculus (Mouse).